The chain runs to 319 residues: MRIGLVCSGGDCAGMNPATKKFVEYSLELGYEPYFIREGLEGLIEGKIEPATLKEVSGILHKGGTILQSSRSKRFFDPAFRLQAYQNLQRHSIEALVTLGGDGSFRAMEVLAKEHSLLYAGIPATIDNDIRASDYALGVDSALNVILESTDRLRDTAESFRRAFVVEVMGRDCGYLALASAIACGAEVCIIPEMGYSLQSLGARLKEELGTGKRRYVLAIVSEGAKASSEVVSWLKEEVGIETRITILGHVQRGGSPSVYDRLMGFRFMQKALDSLSLGKSGVVVLREGRVEFLSSQEASSAPASLPLDMVRLASRLMF.

ATP is bound by residues Gly-10, 71 to 72 (RS), and 101 to 104 (GDGS). Asp-102 serves as a coordination point for Mg(2+). Residue 125 to 127 (TID) coordinates substrate. Asp-127 functions as the Proton acceptor in the catalytic mechanism. ADP is bound at residue Arg-154. Residues Arg-162 and 169-171 (MGR) each bind substrate. 185–187 (GAE) serves as a coordination point for ADP. Substrate is bound by residues Glu-223, Arg-244, and 250 to 253 (HVQR).

Belongs to the phosphofructokinase type A (PFKA) family. ATP-dependent PFK group I subfamily. Prokaryotic clade 'B1' sub-subfamily. As to quaternary structure, homotetramer. The cofactor is Mg(2+).

The protein resides in the cytoplasm. It carries out the reaction beta-D-fructose 6-phosphate + ATP = beta-D-fructose 1,6-bisphosphate + ADP + H(+). Its pathway is carbohydrate degradation; glycolysis; D-glyceraldehyde 3-phosphate and glycerone phosphate from D-glucose: step 3/4. Allosterically activated by ADP and other diphosphonucleosides, and allosterically inhibited by phosphoenolpyruvate. Functionally, catalyzes the phosphorylation of D-fructose 6-phosphate to fructose 1,6-bisphosphate by ATP, the first committing step of glycolysis. This is ATP-dependent 6-phosphofructokinase from Wolinella succinogenes (strain ATCC 29543 / DSM 1740 / CCUG 13145 / JCM 31913 / LMG 7466 / NCTC 11488 / FDC 602W) (Vibrio succinogenes).